The primary structure comprises 220 residues: Deoxyribose-phosphate aldolase (220 aa).

Aspartate 89 functions as the Proton donor/acceptor in the catalytic mechanism. Lysine 151 (schiff-base intermediate with acetaldehyde) is an active-site residue. The active-site Proton donor/acceptor is lysine 180.

This sequence belongs to the DeoC/FbaB aldolase family. DeoC type 1 subfamily.

It localises to the cytoplasm. The catalysed reaction is 2-deoxy-D-ribose 5-phosphate = D-glyceraldehyde 3-phosphate + acetaldehyde. It participates in carbohydrate degradation; 2-deoxy-D-ribose 1-phosphate degradation; D-glyceraldehyde 3-phosphate and acetaldehyde from 2-deoxy-alpha-D-ribose 1-phosphate: step 2/2. In terms of biological role, catalyzes a reversible aldol reaction between acetaldehyde and D-glyceraldehyde 3-phosphate to generate 2-deoxy-D-ribose 5-phosphate. The protein is Deoxyribose-phosphate aldolase of Streptococcus suis (strain 05ZYH33).